The sequence spans 515 residues: Phospholipase A1-Igamma1, chloroplastic (515 aa).

A chloroplast-targeting transit peptide spans 1-44; that stretch reads MATIPSHNLRPHTTNQRTQYSLSFRPHFSRSTLITFPARSSPAR. The GXSXG signature appears at 301–305; that stretch reads GHSLG. The active-site Acyl-ester intermediate is serine 303. Residues aspartate 366 and histidine 422 each act as charge relay system in the active site.

It belongs to the AB hydrolase superfamily. Lipase family. Ubiquitous. Highly expressed in leaves.

It localises to the plastid. It is found in the chloroplast. The enzyme catalyses 1,2-dihexadecanoyl-sn-glycero-3-phosphocholine + H2O = 2-hexadecanoyl-sn-glycero-3-phosphocholine + hexadecanoate + H(+). It catalyses the reaction a 1,2-diacyl-3-O-(beta-D-galactosyl)-sn-glycerol + H2O = an acyl-3-O-(beta-D-galactosyl)-sn-glycerol + a fatty acid + H(+). It carries out the reaction a 1,2-diacyl-3-O-[alpha-D-galactosyl-(1-&gt;6)-beta-D-galactosyl]-sn-glycerol + H2O = acyl-3-O-[alpha-D-galactosyl-(1-&gt;6)-beta-D-galactosyl]-sn-glycerol + a fatty acid + H(+). Acylhydrolase with a broad specificity. Catalyzes the hydrolysis of phosphatidylcholine at the sn-1 position. Moderate activity toward phosphatidylcholine (PC), monogalactosyldiacylglycerol (MGDG), digalactosyldiacylglycerol (DGDG) and triacylglycerol (TAG). May display dual sn-1/sn-2 substrate specificity. Could be involved in early wound response. This Arabidopsis thaliana (Mouse-ear cress) protein is Phospholipase A1-Igamma1, chloroplastic.